Reading from the N-terminus, the 137-residue chain is Small heat shock protein IbpA (137 aa).

One can recognise a sHSP domain in the interval 28–137; sequence SQSNGGYPPY…ANKPRRIEIN (110 aa).

This sequence belongs to the small heat shock protein (HSP20) family. In terms of assembly, monomer. Forms homomultimers of about 100-150 subunits at optimal growth temperatures. Conformation changes to monomers at high temperatures or high ionic concentrations.

It localises to the cytoplasm. Functionally, associates with aggregated proteins, together with IbpB, to stabilize and protect them from irreversible denaturation and extensive proteolysis during heat shock and oxidative stress. Aggregated proteins bound to the IbpAB complex are more efficiently refolded and reactivated by the ATP-dependent chaperone systems ClpB and DnaK/DnaJ/GrpE. Its activity is ATP-independent. This chain is Small heat shock protein IbpA, found in Klebsiella pneumoniae (strain 342).